The sequence spans 286 residues: 3-methyl-2-oxobutanoate hydroxymethyltransferase (286 aa).

Residues Asp51 and Asp90 each contribute to the Mg(2+) site. Residues 51–52, Asp90, and Lys120 contribute to the 3-methyl-2-oxobutanoate site; that span reads DS. Mg(2+) is bound at residue Glu122. Glu189 acts as the Proton acceptor in catalysis. Residues 263-286 are disordered; sequence TFPGPSHVFSGSKASSDLNGGDES.

It belongs to the PanB family. Homodecamer; pentamer of dimers. Mg(2+) serves as cofactor.

Its subcellular location is the cytoplasm. It carries out the reaction 3-methyl-2-oxobutanoate + (6R)-5,10-methylene-5,6,7,8-tetrahydrofolate + H2O = 2-dehydropantoate + (6S)-5,6,7,8-tetrahydrofolate. The protein operates within cofactor biosynthesis; (R)-pantothenate biosynthesis; (R)-pantoate from 3-methyl-2-oxobutanoate: step 1/2. Its function is as follows. Catalyzes the reversible reaction in which hydroxymethyl group from 5,10-methylenetetrahydrofolate is transferred onto alpha-ketoisovalerate to form ketopantoate. This Mesorhizobium japonicum (strain LMG 29417 / CECT 9101 / MAFF 303099) (Mesorhizobium loti (strain MAFF 303099)) protein is 3-methyl-2-oxobutanoate hydroxymethyltransferase.